The sequence spans 300 residues: N-acetylmuramic acid 6-phosphate etherase (300 aa).

Positions 55-217 (IAERLRAGGR…STGAMIRLGK (163 aa)) constitute an SIS domain. Glutamate 83 acts as the Proton donor in catalysis. The active site involves glutamate 114.

The protein belongs to the GCKR-like family. MurNAc-6-P etherase subfamily. Homodimer.

The catalysed reaction is N-acetyl-D-muramate 6-phosphate + H2O = N-acetyl-D-glucosamine 6-phosphate + (R)-lactate. It functions in the pathway amino-sugar metabolism; N-acetylmuramate degradation. Its function is as follows. Specifically catalyzes the cleavage of the D-lactyl ether substituent of MurNAc 6-phosphate, producing GlcNAc 6-phosphate and D-lactate. This Symbiobacterium thermophilum (strain DSM 24528 / JCM 14929 / IAM 14863 / T) protein is N-acetylmuramic acid 6-phosphate etherase.